The sequence spans 421 residues: Testin (421 aa).

The region spanning 92 to 199 is the PET domain; it reads MILTNPVAAK…GDVKLPREMN (108 aa). The interval 133-164 is disordered; the sequence is EKQPVAGSEGAQYRKKQLAKQLPAHDQDPSKC. Over residues 155–164 the composition is skewed to basic and acidic residues; the sequence is PAHDQDPSKC. LIM zinc-binding domains lie at 234 to 297, 299 to 359, and 362 to 421; these read YSCY…CDSE, PRCA…NHAV, and QGCH…KMMS.

It belongs to the prickle / espinas / testin family. In terms of assembly, interacts via LIM domain 1 with ZYX. Interacts (via LIM domain 3) with ENAH and VASP. Interacts with ALKBH4, talin, actin, alpha-actinin, GRIP1 and PXN. Interacts (via LIM domain 2) with ACTL7A (via N-terminus). Heterodimer with ACTL7A; the heterodimer interacts with ENAH to form a heterotrimer.

It is found in the cytoplasm. The protein localises to the cell junction. It localises to the focal adhesion. Its function is as follows. Scaffold protein that may play a role in cell adhesion, cell spreading and in the reorganization of the actin cytoskeleton. Plays a role in the regulation of cell proliferation. May act as a tumor suppressor. The protein is Testin (TES) of Sus scrofa (Pig).